The primary structure comprises 77 residues: Acyl carrier protein (77 aa).

One can recognise a Carrier domain in the interval 1 to 76 (MENFDKVKDI…DAVKFINSIE (76 aa)). Ser36 is subject to O-(pantetheine 4'-phosphoryl)serine.

Belongs to the acyl carrier protein (ACP) family. In terms of processing, 4'-phosphopantetheine is transferred from CoA to a specific serine of apo-ACP by AcpS. This modification is essential for activity because fatty acids are bound in thioester linkage to the sulfhydryl of the prosthetic group.

The protein resides in the cytoplasm. Its pathway is lipid metabolism; fatty acid biosynthesis. Carrier of the growing fatty acid chain in fatty acid biosynthesis. The sequence is that of Acyl carrier protein from Staphylococcus saprophyticus subsp. saprophyticus (strain ATCC 15305 / DSM 20229 / NCIMB 8711 / NCTC 7292 / S-41).